Consider the following 291-residue polypeptide: Acidic endochitinase (291 aa).

The first 22 residues, 1-22 (MIKYSFLLTALVLFLRALKLEA), serve as a signal peptide directing secretion. Residues 23-291 (GDIVIYWGQN…GYSSAIKANV (269 aa)) form the GH18 domain. 2 cysteine pairs are disulfide-bonded: Cys42-Cys89 and Cys72-Cys79. Glu149 acts as the Proton donor in catalysis. A disulfide bridge links Cys180 with Cys209.

Belongs to the glycosyl hydrolase 18 family. Chitinase class II subfamily.

It localises to the secreted. The protein localises to the cell wall. The enzyme catalyses Random endo-hydrolysis of N-acetyl-beta-D-glucosaminide (1-&gt;4)-beta-linkages in chitin and chitodextrins.. Its function is as follows. This protein functions as a defense against chitin containing fungal pathogens. The protein is Acidic endochitinase of Nicotiana tabacum (Common tobacco).